Consider the following 116-residue polypeptide: Large ribosomal subunit protein bL20 (116 aa).

It belongs to the bacterial ribosomal protein bL20 family.

Its function is as follows. Binds directly to 23S ribosomal RNA and is necessary for the in vitro assembly process of the 50S ribosomal subunit. It is not involved in the protein synthesizing functions of that subunit. The polypeptide is Large ribosomal subunit protein bL20 (Mycoplasmopsis synoviae (strain 53) (Mycoplasma synoviae)).